The sequence spans 308 residues: Acetyl-coenzyme A carboxylase carboxyl transferase subunit beta (308 aa).

Residues 25–294 form the CoA carboxyltransferase N-terminal domain; the sequence is VWTKCTSCEQ…PLVVSVNDAP (270 aa). Residues cysteine 29, cysteine 32, cysteine 48, and cysteine 51 each coordinate Zn(2+). The C4-type zinc-finger motif lies at 29 to 51; it reads CTSCEQVLYYAELERNLEVCPKC.

It belongs to the AccD/PCCB family. As to quaternary structure, acetyl-CoA carboxylase is a heterohexamer composed of biotin carboxyl carrier protein (AccB), biotin carboxylase (AccC) and two subunits each of ACCase subunit alpha (AccA) and ACCase subunit beta (AccD). Requires Zn(2+) as cofactor.

Its subcellular location is the cytoplasm. The enzyme catalyses N(6)-carboxybiotinyl-L-lysyl-[protein] + acetyl-CoA = N(6)-biotinyl-L-lysyl-[protein] + malonyl-CoA. It functions in the pathway lipid metabolism; malonyl-CoA biosynthesis; malonyl-CoA from acetyl-CoA: step 1/1. Functionally, component of the acetyl coenzyme A carboxylase (ACC) complex. Biotin carboxylase (BC) catalyzes the carboxylation of biotin on its carrier protein (BCCP) and then the CO(2) group is transferred by the transcarboxylase to acetyl-CoA to form malonyl-CoA. This chain is Acetyl-coenzyme A carboxylase carboxyl transferase subunit beta, found in Vibrio cholerae serotype O1 (strain ATCC 39315 / El Tor Inaba N16961).